We begin with the raw amino-acid sequence, 194 residues long: Small ribosomal subunit protein uS4c (194 aa).

The S4 RNA-binding domain occupies 82–143; sequence MRLDNILFRL…KQRSKALIQD (62 aa).

It belongs to the universal ribosomal protein uS4 family. As to quaternary structure, part of the 30S ribosomal subunit. Contacts protein S5. The interaction surface between S4 and S5 is involved in control of translational fidelity.

The protein localises to the plastid. Its subcellular location is the chloroplast. Its function is as follows. One of the primary rRNA binding proteins, it binds directly to 16S rRNA where it nucleates assembly of the body of the 30S subunit. In terms of biological role, with S5 and S12 plays an important role in translational accuracy. The polypeptide is Small ribosomal subunit protein uS4c (rps4) (Bobartia gladiata (Sword rush-lily)).